Here is a 145-residue protein sequence, read N- to C-terminus: MTLGSGSSVVVPRNFRLLEELERGEKGIGDGTVSYGMDDGDDIYMRSWTGTIIGPHNTVHEGRIYQLKLFCDKDYPEKPPTVRFHSRINMTCVNHDTGVVDSKKFGVLANWQRQYTMEDILTQLKKEMAASHNRKLVQPPEGTFF.

In terms of domain architecture, UBC core spans 12–145 (PRNFRLLEEL…LVQPPEGTFF (134 aa)).

The protein belongs to the ubiquitin-conjugating enzyme family. In terms of assembly, heterodimer with UBC35 or UBC36. Expressed in roots, shoots, leaves, stems and flowers, but not in pollen.

Its function is as follows. Has no ubiquitin ligase activity on its own. The heterodimer with UBC catalyzes the synthesis of non-canonical poly-ubiquitin chains that are linked through 'Lys-63'. This type of poly-ubiquitination does not lead to protein degradation by the proteasome. Mediates transcriptional activation of target genes. May play a role in the control of progress through the cell cycle and differentiation. May play a role in the error-free DNA repair pathway and contributes to the survival of cells after DNA damage. This chain is Ubiquitin-conjugating enzyme E2 variant 1C (UEV1C), found in Arabidopsis thaliana (Mouse-ear cress).